Consider the following 184-residue polypeptide: Helix-loop-helix protein ngn-1 (184 aa).

The tract at residues 1-55 (MYHHSPFYPHHLQTGEQDLDMERENDMDQNSKNSTQKPVKREKRRYRCRKRSPAT) is disordered. Polar residues predominate over residues 28 to 37 (DQNSKNSTQK). Residues 38 to 52 (PVKREKRRYRCRKRS) show a composition bias toward basic residues. The segment at 62–75 (VRRDKANARERRRM) is basic motif. The bHLH domain occupies 62-114 (VRRDKANARERRRMNSLNDALEHLRGILPALPDEPKMTKIETLRKAQEYIASL). The helix-loop-helix motif stretch occupies residues 76 to 114 (NSLNDALEHLRGILPALPDEPKMTKIETLRKAQEYIASL). Residues 164-184 (SNPPSQMYYHHHHQSPSFPHH) are disordered. Positions 172–184 (YHHHHQSPSFPHH) are enriched in basic residues.

Interacts with hlh-2; the interaction is direct.

It localises to the nucleus. In terms of biological role, acts as a transcriptional regulator. Regulates expression of various genes, including homeobox protein unc-42 and helix-loop-helix protein hlh-34. Required for embryonic viability, neuromuscular development, organization of the nerve ring and neuronal cell body location. Regulates AIY neuron axon morphology and cell fate. Plays a role in cell autonomously establishing a neuronal left-right asymmetry. Involved in regulating glial specification. The polypeptide is Helix-loop-helix protein ngn-1 (Caenorhabditis elegans).